Consider the following 141-residue polypeptide: Flagellar assembly factor FliW (141 aa).

It belongs to the FliW family. As to quaternary structure, interacts with translational regulator CsrA and flagellin(s).

The protein resides in the cytoplasm. Its function is as follows. Acts as an anti-CsrA protein, binds CsrA and prevents it from repressing translation of its target genes, one of which is flagellin. Binds to flagellin and participates in the assembly of the flagellum. The polypeptide is Flagellar assembly factor FliW (Clostridium acetobutylicum (strain ATCC 824 / DSM 792 / JCM 1419 / IAM 19013 / LMG 5710 / NBRC 13948 / NRRL B-527 / VKM B-1787 / 2291 / W)).